The following is a 191-amino-acid chain: Cdc42 homolog (191 aa).

10–17 (GDGAVGKT) contacts GTP. An Effector region motif is present at residues 32 to 40 (YVPTVFDNY). GTP contacts are provided by residues 57–61 (DTAGQ) and 115–118 (TQID). Cysteine 188 is modified (cysteine methyl ester). The S-geranylgeranyl cysteine moiety is linked to residue cysteine 188. The propeptide at 189–191 (KFL) is removed in mature form.

Belongs to the small GTPase superfamily. Rho family. CDC42 subfamily.

It is found in the cell junction. Its subcellular location is the adherens junction. The protein resides in the cell membrane. The catalysed reaction is GTP + H2O = GDP + phosphate + H(+). Its function is as follows. Regulates mbt kinase activity and is also required to recruit mbt to adherens junctions. Together with mbt, regulates photoreceptor cell morphogenesis. In Drosophila pseudoobscura pseudoobscura (Fruit fly), this protein is Cdc42 homolog.